We begin with the raw amino-acid sequence, 64 residues long: Chassatide C7 (64 aa).

Positions 1–35 (VLVASLVMLEAQSSDTIQVPDWGKRLLMNHDSNRV) are cleaved as a propeptide — removed in mature form. 3 disulfide bridges follow: cysteine 39-cysteine 55, cysteine 43-cysteine 57, and cysteine 48-cysteine 62.

As to expression, expressed in fruit, pedicel, root and stem but not in leaf (at protein level).

Probably participates in a plant defense mechanism. Active against E.coli ATTC25922 but not against S.aureus ATCC 12600 or S.epidermidis ATCC 14990. Has cytotoxic and hemolytic activity. This chain is Chassatide C7, found in Chassalia chartacea (Chassalia curviflora).